The primary structure comprises 337 residues: Holliday junction branch migration complex subunit RuvB (337 aa).

Positions 1 to 180 (MTRLISADKS…FGVISRLEFY (180 aa)) are large ATPase domain (RuvB-L). ATP is bound by residues Leu19, Arg20, Gly61, Lys64, Thr65, Thr66, 127–129 (EDF), Arg170, Tyr180, and Arg217. Residue Thr65 participates in Mg(2+) binding. Residues 181–251 (THDELAFIIT…VADQALALLE (71 aa)) form a small ATPAse domain (RuvB-S) region. The tract at residues 254–337 (EMGFDMMDRA…APEPPQGKLF (84 aa)) is head domain (RuvB-H). DNA contacts are provided by Arg309 and Arg314.

This sequence belongs to the RuvB family. In terms of assembly, homohexamer. Forms an RuvA(8)-RuvB(12)-Holliday junction (HJ) complex. HJ DNA is sandwiched between 2 RuvA tetramers; dsDNA enters through RuvA and exits via RuvB. An RuvB hexamer assembles on each DNA strand where it exits the tetramer. Each RuvB hexamer is contacted by two RuvA subunits (via domain III) on 2 adjacent RuvB subunits; this complex drives branch migration. In the full resolvosome a probable DNA-RuvA(4)-RuvB(12)-RuvC(2) complex forms which resolves the HJ.

It localises to the cytoplasm. The enzyme catalyses ATP + H2O = ADP + phosphate + H(+). The RuvA-RuvB-RuvC complex processes Holliday junction (HJ) DNA during genetic recombination and DNA repair, while the RuvA-RuvB complex plays an important role in the rescue of blocked DNA replication forks via replication fork reversal (RFR). RuvA specifically binds to HJ cruciform DNA, conferring on it an open structure. The RuvB hexamer acts as an ATP-dependent pump, pulling dsDNA into and through the RuvAB complex. RuvB forms 2 homohexamers on either side of HJ DNA bound by 1 or 2 RuvA tetramers; 4 subunits per hexamer contact DNA at a time. Coordinated motions by a converter formed by DNA-disengaged RuvB subunits stimulates ATP hydrolysis and nucleotide exchange. Immobilization of the converter enables RuvB to convert the ATP-contained energy into a lever motion, pulling 2 nucleotides of DNA out of the RuvA tetramer per ATP hydrolyzed, thus driving DNA branch migration. The RuvB motors rotate together with the DNA substrate, which together with the progressing nucleotide cycle form the mechanistic basis for DNA recombination by continuous HJ branch migration. Branch migration allows RuvC to scan DNA until it finds its consensus sequence, where it cleaves and resolves cruciform DNA. The sequence is that of Holliday junction branch migration complex subunit RuvB from Geobacter sp. (strain M21).